The primary structure comprises 436 residues: Bystin (436 aa).

Position 145 is a phosphothreonine (Thr-145). Ser-148 and Ser-152 each carry phosphoserine.

It belongs to the bystin family.

It localises to the nucleus. The protein resides in the nucleolus. Required for processing of 20S pre-rRNA precursor and biogenesis of 40S ribosomal subunits. The chain is Bystin (bys) from Drosophila melanogaster (Fruit fly).